The primary structure comprises 147 residues: Hemoglobin subunit beta-2 (147 aa).

A Globin domain is found at 3–147 (HWTAEEKATI…LVAALSHGYF (145 aa)). Heme b-binding residues include H64 and H93.

It belongs to the globin family. As to quaternary structure, heterotetramer of two alpha chains and two beta chains. Red blood cells.

Functionally, this is a larval (tadpole) beta-globin. This Xenopus tropicalis (Western clawed frog) protein is Hemoglobin subunit beta-2 (hbb2).